The primary structure comprises 549 residues: ATP synthase subunit alpha (549 aa).

172–179 serves as a coordination point for ATP; that stretch reads GDRKTGKT. The disordered stretch occupies residues 513–549; sequence SSTGESVVPDEHVEAMDEEDLGKESVKVKKPAPQKKK. Residues 540 to 549 show a composition bias toward basic residues; it reads VKKPAPQKKK.

The protein belongs to the ATPase alpha/beta chains family. F-type ATPases have 2 components, CF(1) - the catalytic core - and CF(0) - the membrane proton channel. CF(1) has five subunits: alpha(3), beta(3), gamma(1), delta(1), epsilon(1). CF(0) has three main subunits: a(1), b(2) and c(9-12). The alpha and beta chains form an alternating ring which encloses part of the gamma chain. CF(1) is attached to CF(0) by a central stalk formed by the gamma and epsilon chains, while a peripheral stalk is formed by the delta and b chains.

The protein resides in the cell membrane. It catalyses the reaction ATP + H2O + 4 H(+)(in) = ADP + phosphate + 5 H(+)(out). Produces ATP from ADP in the presence of a proton gradient across the membrane. The alpha chain is a regulatory subunit. The polypeptide is ATP synthase subunit alpha (Mycobacterium marinum (strain ATCC BAA-535 / M)).